Here is a 234-residue protein sequence, read N- to C-terminus: Purine nucleoside phosphorylase DeoD-type (234 aa).

A purine D-ribonucleoside is bound at residue His-5. Residues Gly-21, Arg-25, Arg-44, and 88-91 (RIGT) contribute to the phosphate site. A purine D-ribonucleoside is bound by residues 180–182 (DME) and 204–205 (SD). Residue Asp-205 is the Proton donor of the active site.

This sequence belongs to the PNP/UDP phosphorylase family. Homohexamer; trimer of homodimers.

The enzyme catalyses a purine D-ribonucleoside + phosphate = a purine nucleobase + alpha-D-ribose 1-phosphate. The catalysed reaction is a purine 2'-deoxy-D-ribonucleoside + phosphate = a purine nucleobase + 2-deoxy-alpha-D-ribose 1-phosphate. Functionally, catalyzes the reversible phosphorolytic breakdown of the N-glycosidic bond in the beta-(deoxy)ribonucleoside molecules, with the formation of the corresponding free purine bases and pentose-1-phosphate. This chain is Purine nucleoside phosphorylase DeoD-type, found in Buchnera aphidicola subsp. Acyrthosiphon pisum (strain 5A).